Consider the following 80-residue polypeptide: RNA-binding protein Hfq (80 aa).

The region spanning 10-69 (DPFLNALRKEHVPVSIYLVNGIKLQGNIESFDQYVVLLRNTVTQMVYKHAISTVVPARPV) is the Sm domain.

Belongs to the Hfq family. As to quaternary structure, homohexamer.

RNA chaperone that binds small regulatory RNA (sRNAs) and mRNAs to facilitate mRNA translational regulation in response to envelope stress, environmental stress and changes in metabolite concentrations. Also binds with high specificity to tRNAs. The polypeptide is RNA-binding protein Hfq (Burkholderia ambifaria (strain ATCC BAA-244 / DSM 16087 / CCUG 44356 / LMG 19182 / AMMD) (Burkholderia cepacia (strain AMMD))).